The primary structure comprises 98 residues: Putative transcriptional regulator YdaS (98 aa).

Its function is as follows. When overexpressed, it induces Rac prophage excision, possibly to counteract the lethal toxicity of YdaT. Overexpression of ydaS or ydaST reduces growth and leads to loss of cell viability. May contribute to toxicity and morphological defects. This is Putative transcriptional regulator YdaS (ydaS) from Escherichia coli (strain K12).